Consider the following 148-residue polypeptide: Large ribosomal subunit protein cL37 (148 aa).

Residues 1–65 (MALLCFNSLP…SSHGRIVVKA (65 aa)) constitute a chloroplast transit peptide. Residue alanine 66 is modified to N-acetylalanine. A disordered region spans residues 125 to 148 (LVRKRKMRKKGRWPPSKMKKNKNV).

This sequence belongs to the chloroplast-specific ribosomal protein cL37 family. As to quaternary structure, part of the 50S ribosomal subunit.

It localises to the plastid. It is found in the chloroplast. In Arabidopsis thaliana (Mouse-ear cress), this protein is Large ribosomal subunit protein cL37 (PSRP5).